The primary structure comprises 432 residues: Hexuronate transporter (432 aa).

A signal peptide spans 1 to 31; sequence MRKIKGLRWYMIALVTLGTVLGYLTRNTVAA. Residues 33-48 lie on the Periplasmic side of the membrane; it reads APTLMEELNISTQQYS. Residues 49–69 form a helical membrane-spanning segment; sequence YIIAAYSAAYTVMQPVAGYVL. Over 70 to 75 the chain is Cytoplasmic; that stretch reads DVLGTK. The chain crosses the membrane as a helical span at residues 76–96; sequence IGYAMFAVLWAVFCGATALAG. Topologically, residues 97 to 99 are periplasmic; the sequence is SWG. The helical transmembrane segment at 100-120 threads the bilayer; that stretch reads GLAVARGAVGAAEAAMIPAGL. The Cytoplasmic segment spans residues 121–138; that stretch reads KASSEWFPAKERSIAVGY. The helical transmembrane segment at 139–159 threads the bilayer; that stretch reads FNVGSSIGAMIAPPLVVWAIV. Over 160-164 the chain is Periplasmic; sequence MHSWQ. Residues 165–185 form a helical membrane-spanning segment; sequence MAFIISGALSFIWAMAWLIFY. The Cytoplasmic segment spans residues 186 to 236; sequence KHPRDQKHLTDEERDYIINGQEAQHQVSTAKKMSVGQILRNRQFWGIALPR. A helical transmembrane segment spans residues 237–257; the sequence is FLAEPAWGTFNAWIPLFMFKV. Over 258–264 the chain is Periplasmic; the sequence is YGFNLKE. A helical transmembrane segment spans residues 265–285; it reads IAMFAWMPMLFADLGCILGGY. Residues 286 to 293 are Cytoplasmic-facing; the sequence is LPPLFQRW. The helical transmembrane segment at 294–314 threads the bilayer; sequence FGVNLIVSRKMVVTLGAVLMI. Residues 315 to 317 are Periplasmic-facing; sequence GPG. A helical membrane pass occupies residues 318 to 338; that stretch reads MIGLFTNPYVAIMLLCIGGFA. Over 339 to 369 the chain is Cytoplasmic; the sequence is HQALSGALITLSSDVFGRNEVATANGLTGMS. The chain crosses the membrane as a helical span at residues 370-390; the sequence is AWLASTLFALVVGALADTIGF. A topological domain (periplasmic) is located at residue S391. The helical transmembrane segment at 392–412 threads the bilayer; sequence PLFAVLAVFDLLGALVIWTVL. The Cytoplasmic portion of the chain corresponds to 413 to 432; it reads QNKPAIEVAQETHNDPAPQH.

Belongs to the major facilitator superfamily. Phthalate permease family.

It localises to the cell inner membrane. The catalysed reaction is aldehydo-D-glucuronate(in) + H(+)(in) = aldehydo-D-glucuronate(out) + H(+)(out). It carries out the reaction aldehydo-D-galacturonate(out) + H(+)(out) = aldehydo-D-galacturonate(in) + H(+)(in). Transport of aldohexuronates such as D-glucuronate and D-galacturonate. The sequence is that of Hexuronate transporter (exuT) from Escherichia coli O157:H7.